We begin with the raw amino-acid sequence, 349 residues long: Core protein VP7 (349 aa).

N287 carries N-linked (GlcNAc...) asparagine; by host glycosylation.

Belongs to the orbivirus VP7 family. In terms of assembly, homotrimer that assemble in a complex of 260 capsomers on an inner scaffold composed of VP3.

The protein resides in the virion. In terms of biological role, the VP7 protein is one of the five proteins (with VP1, VP3, VP4, and VP6) which form the inner capsid of the virus. The sequence is that of Core protein VP7 (Segment-7) from Bluetongue virus 1 (isolate Australia) (BTV 1).